A 329-amino-acid polypeptide reads, in one-letter code: MAITTLDFNQFRSTSADERQIFCADLCETLSVYGFAKIRNTTLSNELIDEIFKYTRSFFALPNDIKAKAKHPNAPNPHRGWSAIGQERVWKISGFEQNKERTDSYNEFRESFDQGAADDQLFPNRWVDEDDLPGFQAFMEGFYKSCDELHAHLLRAISTGLKLPDTLLPSKHRHNTSELRLLHYPPIPCSALRSNMRIGEHSDFGTLTLLLQDSVGGLQVEDQRNPRSFIPVEPEDGYEVVINIGDCLQRWTNRRLCSANHRVMLPEGKDVDSEEVLDDRYSVAYFGKPDRDVLVDTLPECVEVGERVEYGDHLTALQYNQIKLTRTYG.

Residues 175-289 (NTSELRLLHY…RYSVAYFGKP (115 aa)) form the Fe2OG dioxygenase domain. Residues H201, D203, and H261 each contribute to the Fe cation site. Residue R280 participates in 2-oxoglutarate binding.

Belongs to the iron/ascorbate-dependent oxidoreductase family. Requires Fe(2+) as cofactor.

It participates in antifungal biosynthesis. Functionally, 2-oxoglutarate-dependent dioxygenase; part of the gene cluster that mediates the de novo generation of L-homotyrosine from acetyl-CoA and 4-hydroxyphenyl-pyruvate. L-homotyrosine is a building block of echinocandin B, a fungal lipidated cyclic hexapeptide that acts as an antifungal agent. L-homotyrosine 4-hydroxyphenyl-pyruvate first undergoes an aldol-type condensation by htyA with the C-2 of acetyl-CoA followed by the release of CoA to form 2-(4-hydroxybenzyl)-malate. This is followed by isomerization of 2-(4-hydroxy-benzyl)-malate to 3-(4-hydroxybenzyl)-malate by htyD. Thereafter, 3-(4-hydroxybenzyl)-malate undergoes decarboxylation and oxidation to form 2-oxo-4-(4-hydroxybenzyl)butanoic acid, coupled to reduction of NAD(+) to NADH by htyC. The product then undergoes transamination catalyzed by htyB to form L-homotyrosine. This is 2-oxoglutarate-dependent dioxygenase htyE from Aspergillus rugulosus (Emericella rugulosa).